A 441-amino-acid polypeptide reads, in one-letter code: MAGUK p55 subfamily member 4 (441 aa).

Residues 1–84 (MRTVCLVKNQ…TIMFKVIPVS (84 aa)) enclose the PDZ domain. The region spanning 91–161 (QTTVYVRAMI…PSNHLLKRKQ (71 aa)) is the SH3 domain. The 190-residue stretch at 232–421 (HRLIVLVGPS…ARAQLLSAIQ (190 aa)) folds into the Guanylate kinase-like domain. A coiled-coil region spans residues 373–430 (VDMKFKDEDLQEMEELAQKMESQFGQFFDHVIVNDNLQDARAQLLSAIQKAEEELQWV).

The protein belongs to the MAGUK family. In terms of assembly, interacts with MPDZ. May interact with GRIA2. Forms a complex with CRB1 and PALS1. Interacts with FASLG. As to expression, highly expressed in brain and detected in lung, and bone (at protein level). Also expressed in intestine and spleen.

It localises to the cytoplasm. In terms of biological role, may play a role in retinal photoreceptors development. The chain is MAGUK p55 subfamily member 4 (Mpp4) from Rattus norvegicus (Rat).